A 687-amino-acid polypeptide reads, in one-letter code: Guanine-nucleotide exchange factor YEL1 (687 aa).

The segment covering 14–27 (YGVSQKGYNDNFSE) has biased composition (polar residues). Disordered stretches follow at residues 14–35 (YGVSQKGYNDNFSESEGVLHGS) and 63–97 (AANDEKPVIPTTDTATAGTGTEDISSTQSEETDQN). An SEC7 domain is found at 57-264 (ILQNKEAAND…SEYYKTLNET (208 aa)). Residues 73 to 83 (TTDTATAGTGT) show a composition bias toward low complexity. Position 290 is a phosphothreonine (Thr290). 2 positions are modified to phosphoserine: Ser293 and Ser299. The region spanning 412 to 551 (TSRRTSLSYL…DCINFWAGRI (140 aa)) is the PH domain.

The protein belongs to the YEL1 family.

The protein resides in the cytoplasm. It localises to the cell membrane. The protein localises to the bud neck. Its subcellular location is the bud tip. Its function is as follows. Guanine nucleotide exchange factor for ARF3 required for localization of ARF3 to the bud neck and tip and involved in actin patch polarization. The chain is Guanine-nucleotide exchange factor YEL1 (YEL1) from Saccharomyces cerevisiae (strain YJM789) (Baker's yeast).